The primary structure comprises 1181 residues: HEAT repeat-containing protein 6 (1181 aa).

An HEAT 1 repeat occupies 159–198 (LELLGETGLLMKLSDLAQSDPEVRRAAVHCMANLCLSVPG). Disordered stretches follow at residues 294–347 (DGRT…PVTG) and 371–407 (LDGSGAAGKDGVSSPFSSSSWKRVSSSESDFSDAEGG). Residues 300-312 (KPQQSESSASRPT) are compositionally biased toward polar residues. Residues 313–325 (LNKKKKSKVKPKK) are compositionally biased toward basic residues. Phosphoserine occurs at positions 336, 337, 399, and 402. The span at 383 to 399 (SSPFSSSSWKRVSSSES) shows a compositional bias: low complexity. HEAT repeat units lie at residues 452–490 (ELGSPQSVSLMTLTLKDPSPKTRACALQVLSAILEGSKQ), 514–552 (SSIRELHRCLLLALVAESSSQTLTQIIKCLANLVSDAPY), and 558–595 (SLLTKVWNQIKPYIRHKDVNVRVSSLTLLGAIVSTHAP). The interval 613-648 (NSNSATPHLSPPDWWKKAPAGPSLEETSVSSPKGSS) is disordered. Thr-618 carries the phosphothreonine modification. The span at 637–646 (EETSVSSPKG) shows a compositional bias: polar residues. At Ser-643 the chain carries Phosphoserine.

This chain is HEAT repeat-containing protein 6 (HEATR6), found in Pongo abelii (Sumatran orangutan).